Reading from the N-terminus, the 176-residue chain is Oxaleimides biosynthesis cluster protein N (176 aa).

Helical transmembrane passes span 5-25, 71-91, 104-124, and 155-175; these read LLVVSAGSLALKVLRVTPLIT, VWTGVISIVLFTRVALILNLF, FLYGVGLFLSFAHLSVAPKML, and FWIVDVPFWVVGVWATLEGLK.

Its subcellular location is the membrane. The protein operates within secondary metabolite biosynthesis. In terms of biological role, part of the gene cluster that mediates the biosynthesis of oxaleimides, cytotoxic compounds containing an unusual disubstituted succinimide moiety. The first step of the pathway is provided by the HR-PKS poxF that serves in a new mode of collaborative biosynthesis with the PKS-NRPS poxE, by providing the olefin containing amino acid substrate via the synthesis of an ACP-bound dec-4-enoate. The cytochrome P450 monooxygenase poxM-catalyzed oxidation at the alpha-position creates the enzyme-bound 2-hydroxydec-4-enoyl-ACP thioester, which may be prone to spontaneous hydrolysis to yield 2-hydroxydec-4-enoic acid due to increased electrophilicity of the carbonyl. 2-hydroxydec-4-enoic acid can then be further oxidized by poxM to yield the alpha-ketoacid 2-oxodec-4-enoicacid, which is reductively aminated by the aminotransferase poxL to yield (S,E)-2-aminodec-4-enoic acid. The Hybrid PKS-NRPS synthetase poxE then performs condensation between the octaketide product of its PKS modules and the amino group of (S,E)-2-aminodec-4-enoic acid which is activated and incorporated by the adenylation domain. The resulting aminoacyl product can be cyclized by the Diels-Alderase PoxQ and reductively released by the reductive (R) domain of poxE to yield an aldehyde intermediate. The released aldehyde is then substrate for a Knoevenagel condensation by the hydrolyase poxO followed by an oxidation at the 5-position of the pyrrolidone ring. The presence of the olefin from the amino acid building block allows for migration of the substituted allyl group to occur. This allylic transposition reaction takes place in a conjugate addition, semipinacol-like fashion to yield a succinimide intermediate. Iterative two-electron oxidations of the C7 methyl of the succinimide intermediate to the carboxylic acid can be catalyzed by one of two remaining cytochrome P450 monooxygenasess poxC or poxD to yield oxaleimide A. Subsequent oxidation yields the maleimide scaffold oxaleimide I. Both oxaleimide A and oxaleimide I can undergo oxidative modifications in the decalin ring to yield the series of products oxaleimides B to H. The chain is Oxaleimides biosynthesis cluster protein N from Penicillium oxalicum (strain 114-2 / CGMCC 5302) (Penicillium decumbens).